Reading from the N-terminus, the 705-residue chain is Ribosomal RNA large subunit methyltransferase K/L (705 aa).

The 112-residue stretch at 43 to 154 (VVYRCCLWSR…GEKGILGFDL (112 aa)) folds into the THUMP domain.

This sequence belongs to the methyltransferase superfamily. RlmKL family.

The protein resides in the cytoplasm. The catalysed reaction is guanosine(2445) in 23S rRNA + S-adenosyl-L-methionine = N(2)-methylguanosine(2445) in 23S rRNA + S-adenosyl-L-homocysteine + H(+). It carries out the reaction guanosine(2069) in 23S rRNA + S-adenosyl-L-methionine = N(2)-methylguanosine(2069) in 23S rRNA + S-adenosyl-L-homocysteine + H(+). Specifically methylates the guanine in position 2445 (m2G2445) and the guanine in position 2069 (m7G2069) of 23S rRNA. The sequence is that of Ribosomal RNA large subunit methyltransferase K/L from Aliivibrio salmonicida (strain LFI1238) (Vibrio salmonicida (strain LFI1238)).